The chain runs to 151 residues: Ribonuclease H (151 aa).

One can recognise an RNase H type-1 domain in the interval 2–143 (SSNVIEIYAD…ADALANKGVD (142 aa)). Asp-11, Glu-49, Asp-71, and Asp-135 together coordinate Mg(2+).

It belongs to the RNase H family. Monomer. It depends on Mg(2+) as a cofactor.

It is found in the cytoplasm. The enzyme catalyses Endonucleolytic cleavage to 5'-phosphomonoester.. Endonuclease that specifically degrades the RNA of RNA-DNA hybrids. The protein is Ribonuclease H of Methylobacillus flagellatus (strain ATCC 51484 / DSM 6875 / VKM B-1610 / KT).